Consider the following 341-residue polypeptide: uncharacterized protein (341 aa).

3 helical membrane-spanning segments follow: residues 6 to 26 (IIAG…TTLW), 63 to 83 (LLLC…WVLI), and 137 to 157 (AQGL…LSAV).

It localises to the cell membrane. This is an uncharacterized protein from Bacillus subtilis (strain 168).